The primary structure comprises 466 residues: Chromosomal replication initiator protein DnaA (466 aa).

Residues 1-77 form a domain I, interacts with DnaA modulators region; that stretch reads MSQEIWADVL…GAEHPQVEFQ (77 aa). The interval 77 to 121 is domain II; sequence QVLPAAQDALLLPNDPPPAPEAAAPTPKTKAAPTPPPSTPGDNRK. The tract at residues 87–122 is disordered; sequence LLPNDPPPAPEAAAPTPKTKAAPTPPPSTPGDNRKT. Low complexity predominate over residues 97–108; the sequence is EAAAPTPKTKAA. A domain III, AAA+ region region spans residues 122–338; sequence TLNPKYTFEN…GALMRVVAFA (217 aa). Residues glycine 166, glycine 168, lysine 169, and threonine 170 each contribute to the ATP site. The segment at 339-466 is domain IV, binds dsDNA; sequence SLNNVPFSRA…GKEEEEEVGA (128 aa).

This sequence belongs to the DnaA family. In terms of assembly, oligomerizes as a right-handed, spiral filament on DNA at oriC.

It localises to the cytoplasm. Functionally, plays an essential role in the initiation and regulation of chromosomal replication. ATP-DnaA binds to the origin of replication (oriC) to initiate formation of the DNA replication initiation complex once per cell cycle. Binds the DnaA box (a 9 base pair repeat at the origin) and separates the double-stranded (ds)DNA. Forms a right-handed helical filament on oriC DNA; dsDNA binds to the exterior of the filament while single-stranded (ss)DNA is stabiized in the filament's interior. The ATP-DnaA-oriC complex binds and stabilizes one strand of the AT-rich DNA unwinding element (DUE), permitting loading of DNA polymerase. After initiation quickly degrades to an ADP-DnaA complex that is not apt for DNA replication. Binds acidic phospholipids. In terms of biological role, strand separation requires the DnaA boxes and adjacent DnaA-trio motifs but works equally well with ADP or ATP. This chain is Chromosomal replication initiator protein DnaA, found in Deinococcus radiodurans (strain ATCC 13939 / DSM 20539 / JCM 16871 / CCUG 27074 / LMG 4051 / NBRC 15346 / NCIMB 9279 / VKM B-1422 / R1).